The following is a 544-amino-acid chain: Glutamyl-tRNA(Gln) amidotransferase subunit B, chloroplastic/mitochondrial (544 aa).

It belongs to the GatB/GatE family. GatB subfamily. As to quaternary structure, subunit of the heterotrimeric GatCAB amidotransferase (AdT) complex, composed of A, B and C subunits.

The protein localises to the mitochondrion. It is found in the plastid. It localises to the chloroplast. It carries out the reaction L-glutamyl-tRNA(Gln) + L-glutamine + ATP + H2O = L-glutaminyl-tRNA(Gln) + L-glutamate + ADP + phosphate + H(+). Allows the formation of correctly charged Gln-tRNA(Gln) through the transamidation of misacylated Glu-tRNA(Gln) in chloroplasts and mitochondria. The reaction takes place in the presence of glutamine and ATP through an activated gamma-phospho-Glu-tRNA(Gln). This Oryza sativa subsp. japonica (Rice) protein is Glutamyl-tRNA(Gln) amidotransferase subunit B, chloroplastic/mitochondrial.